Reading from the N-terminus, the 284-residue chain is Bifunctional protein FolD (284 aa).

Residues 164-166 and S189 contribute to the NADP(+) site; that span reads GRS.

The protein belongs to the tetrahydrofolate dehydrogenase/cyclohydrolase family. As to quaternary structure, homodimer.

The enzyme catalyses (6R)-5,10-methylene-5,6,7,8-tetrahydrofolate + NADP(+) = (6R)-5,10-methenyltetrahydrofolate + NADPH. It catalyses the reaction (6R)-5,10-methenyltetrahydrofolate + H2O = (6R)-10-formyltetrahydrofolate + H(+). It participates in one-carbon metabolism; tetrahydrofolate interconversion. Catalyzes the oxidation of 5,10-methylenetetrahydrofolate to 5,10-methenyltetrahydrofolate and then the hydrolysis of 5,10-methenyltetrahydrofolate to 10-formyltetrahydrofolate. In Listeria monocytogenes serovar 1/2a (strain ATCC BAA-679 / EGD-e), this protein is Bifunctional protein FolD.